Reading from the N-terminus, the 459-residue chain is Taurine--pyruvate aminotransferase (459 aa).

Lysine 287 bears the N6-(pyridoxal phosphate)lysine mark.

This sequence belongs to the class-III pyridoxal-phosphate-dependent aminotransferase family. Pyridoxal 5'-phosphate is required as a cofactor.

Its subcellular location is the cytoplasm. The enzyme catalyses taurine + pyruvate = sulfoacetaldehyde + L-alanine. It functions in the pathway organosulfur degradation; taurine degradation via aerobic pathway; acetyl phosphate and sulfite from taurine: step 1/2. In terms of biological role, catalyzes the degradation of taurine into alanine and sulfoacetaldehyde. The sequence is that of Taurine--pyruvate aminotransferase from Rhodobacter capsulatus (strain ATCC BAA-309 / NBRC 16581 / SB1003).